We begin with the raw amino-acid sequence, 89 residues long: DNA-directed RNA polymerase subunit Rpo6 (89 aa).

This sequence belongs to the archaeal Rpo6/eukaryotic RPB6 RNA polymerase subunit family. In terms of assembly, part of the RNA polymerase complex.

It is found in the cytoplasm. The catalysed reaction is RNA(n) + a ribonucleoside 5'-triphosphate = RNA(n+1) + diphosphate. Functionally, DNA-dependent RNA polymerase (RNAP) catalyzes the transcription of DNA into RNA using the four ribonucleoside triphosphates as substrates. This Aeropyrum pernix (strain ATCC 700893 / DSM 11879 / JCM 9820 / NBRC 100138 / K1) protein is DNA-directed RNA polymerase subunit Rpo6.